We begin with the raw amino-acid sequence, 165 residues long: LIM domain transcription factor LMO4.2 (165 aa).

2 consecutive LIM zinc-binding domains span residues 21-83 (KRCA…LFGN) and 85-147 (GACS…ALIN).

Its function is as follows. Acts as a positive cofactor of GATA transcription factors to establish the identity of the ventral mesoderm during gastrulation. Down-regulation in the dorsal mesoderm is necessary for the proper formation of this territory since, when present, lmo4 may bind ldb1 and restrict the availability of this cofactor for Spemman organizer transcription factors. At neurula stages, suppresses primary neuron differentiation and modulates gene expression at the Isthmic Organizer of the midbrain-hindbrain boundary. The chain is LIM domain transcription factor LMO4.2 (lmo4.2) from Xenopus tropicalis (Western clawed frog).